The following is a 523-amino-acid chain: Sorting nexin-2 (523 aa).

The segment at 1 to 104 (MAAEREPPPL…EPSPAVTPVT (104 aa)) is disordered. Low complexity-rich tracts occupy residues 27-50 (LFTS…LPAE) and 93-104 (SSEPSPAVTPVT). The residue at position 97 (Ser-97) is a Phosphoserine. Phosphothreonine is present on residues Thr-101 and Thr-104. Residues Ser-117 and Ser-119 each carry the phosphoserine modification. The 130-residue stretch at 140-269 (FDIEIGVSDP…QFLESSELPR (130 aa)) folds into the PX domain. 4 residues coordinate a 1,2-diacyl-sn-glycero-3-phospho-(1D-myo-inositol-3-phosphate): Arg-183, Ser-185, Lys-211, and Arg-235. Position 185 is a phosphoserine (Ser-185). Residues 260–523 (QFLESSELPR…AFLPEAKAIA (264 aa)) are interaction with RhoG. The residue at position 277 (Ser-277) is a Phosphoserine. Positions 278–295 (GAGILRMVNKAADAVNKM) are membrane-binding amphipathic helix. Residues 299 to 523 (MNESDAWFEE…AFLPEAKAIA (225 aa)) enclose the BAR domain. Lys-473 carries the N6-acetyllysine modification.

This sequence belongs to the sorting nexin family. Predominantly forms heterodimers with BAR domain-containing sorting nexins SNX5, SNX6 and SNX32; can self-associate to form homodimers. The heterodimers are proposed to self-assemble into helical arrays on the membrane to stabilize and expand local membrane curvature underlying endosomal tubule formation. Thought to be a component of the originally described retromer complex (also called SNX-BAR retromer) which is a pentamer containing the heterotrimeric retromer cargo-selective complex (CSC), also described as vacuolar protein sorting subcomplex (VPS), and a heterodimeric membrane-deforming subcomplex formed between SNX1 or SNX2 and SNX5 or SNX6 (also called SNX-BAR subcomplex); the respective CSC and SNX-BAR subcomplexes associate with low affinity. Interacts with SNX5, SNX6, SNX32, VPS26A, VPS29, VPS35, FNBP1, KALRN, RHOG (GDP-bound form).

It is found in the early endosome membrane. Its subcellular location is the cell projection. The protein resides in the lamellipodium. Involved in several stages of intracellular trafficking. Interacts with membranes containing phosphatidylinositol 3-phosphate (PtdIns(3P)) or phosphatidylinositol 3,5-bisphosphate (PtdIns(3,5)P2). Acts in part as component of the retromer membrane-deforming SNX-BAR subcomplex. The SNX-BAR retromer mediates retrograde transport of cargo proteins from endosomes to the trans-Golgi network (TGN) and is involved in endosome-to-plasma membrane transport for cargo protein recycling. The SNX-BAR subcomplex functions to deform the donor membrane into a tubular profile called endosome-to-TGN transport carrier (ETC). Can sense membrane curvature and has in vitro vesicle-to-membrane remodeling activity. Required for retrograde endosome-to-TGN transport of TGN38. Promotes KALRN- and RHOG-dependent but retromer-independent membrane remodeling such as lamellipodium formation; the function is dependent on GEF activity of KALRN. The polypeptide is Sorting nexin-2 (SNX2) (Macaca fascicularis (Crab-eating macaque)).